The following is a 366-amino-acid chain: Alanine racemase (366 aa).

The active-site Proton acceptor; specific for D-alanine is the Lys40. Position 40 is an N6-(pyridoxal phosphate)lysine (Lys40). Arg136 serves as a coordination point for substrate. Tyr263 functions as the Proton acceptor; specific for L-alanine in the catalytic mechanism. Substrate is bound at residue Met310.

Belongs to the alanine racemase family. Pyridoxal 5'-phosphate serves as cofactor.

The enzyme catalyses L-alanine = D-alanine. It functions in the pathway amino-acid biosynthesis; D-alanine biosynthesis; D-alanine from L-alanine: step 1/1. Functionally, catalyzes the interconversion of L-alanine and D-alanine. May also act on other amino acids. This Streptococcus equi subsp. zooepidemicus (strain H70) protein is Alanine racemase (alr).